The sequence spans 399 residues: Bone morphogenetic protein 8B (399 aa).

Positions 1–19 (MAARPGLLWLLGLALCVLG) are cleaved as a signal peptide. Residues 20-260 (GGHLSHPPHV…ANQSPVRAPR (241 aa)) constitute a propeptide that is removed on maturation. Residues asparagine 155 and asparagine 340 are each glycosylated (N-linked (GlcNAc...) asparagine). Cystine bridges form between cysteine 298–cysteine 364, cysteine 327–cysteine 396, and cysteine 331–cysteine 398.

The protein belongs to the TGF-beta family. Homodimer; disulfide-linked. As to expression, expressed in testis. Expressed in decidual cells of the uterus and in trophoblast cells of the labyrinthine region of the placenta and in the inner root sheath of hair follicles of early postnatal skin. Expressed in the extraembryonic ectoderm in pregastrula and gastrula stage mouse embryos. Expressed in brown adipose tissue and brain.

The protein resides in the secreted. Its function is as follows. Induces cartilage and bone formation. May be the osteoinductive factor responsible for the phenomenon of epithelial osteogenesis. Plays a role in calcium regulation and bone homeostasis. Involved in the generation of primordial germ cells; this function involves Bmp4 in a synergistic manner though separate receptor complexes seem to be involved. Required for the initiation and maintenance of spermatogenesis. Signaling protein involved in regulation of thermogenesis and energy balance. Proposed to increase the peripheral response of brown adipose tissue (BAT) to adrenergic stimulation while acting centrally in the hypothalamus to increase sympathetic output to BAT. This chain is Bone morphogenetic protein 8B (Bmp8b), found in Mus musculus (Mouse).